The primary structure comprises 342 residues: Glycerol-3-phosphate dehydrogenase [NAD(P)+] (342 aa).

Residues Trp-11, Arg-33, and Lys-112 each contribute to the NADPH site. Sn-glycerol 3-phosphate-binding residues include Lys-112, Gly-147, and Ser-149. Position 151 (Ala-151) interacts with NADPH. Sn-glycerol 3-phosphate contacts are provided by Lys-202, Asp-255, Ser-265, Arg-266, and Asn-267. The active-site Proton acceptor is the Lys-202. Arg-266 provides a ligand contact to NADPH. Residues Val-290 and Glu-292 each coordinate NADPH.

Belongs to the NAD-dependent glycerol-3-phosphate dehydrogenase family.

It is found in the cytoplasm. It catalyses the reaction sn-glycerol 3-phosphate + NAD(+) = dihydroxyacetone phosphate + NADH + H(+). It carries out the reaction sn-glycerol 3-phosphate + NADP(+) = dihydroxyacetone phosphate + NADPH + H(+). It participates in membrane lipid metabolism; glycerophospholipid metabolism. Catalyzes the reduction of the glycolytic intermediate dihydroxyacetone phosphate (DHAP) to sn-glycerol 3-phosphate (G3P), the key precursor for phospholipid synthesis. The protein is Glycerol-3-phosphate dehydrogenase [NAD(P)+] of Cupriavidus metallidurans (strain ATCC 43123 / DSM 2839 / NBRC 102507 / CH34) (Ralstonia metallidurans).